The chain runs to 252 residues: 3-deoxy-manno-octulosonate cytidylyltransferase (252 aa).

The protein belongs to the KdsB family.

The protein resides in the cytoplasm. It catalyses the reaction 3-deoxy-alpha-D-manno-oct-2-ulosonate + CTP = CMP-3-deoxy-beta-D-manno-octulosonate + diphosphate. It functions in the pathway nucleotide-sugar biosynthesis; CMP-3-deoxy-D-manno-octulosonate biosynthesis; CMP-3-deoxy-D-manno-octulosonate from 3-deoxy-D-manno-octulosonate and CTP: step 1/1. The protein operates within bacterial outer membrane biogenesis; lipopolysaccharide biosynthesis. Functionally, activates KDO (a required 8-carbon sugar) for incorporation into bacterial lipopolysaccharide in Gram-negative bacteria. This chain is 3-deoxy-manno-octulosonate cytidylyltransferase, found in Thiobacillus denitrificans (strain ATCC 25259 / T1).